We begin with the raw amino-acid sequence, 48 residues long: Small, acid-soluble spore protein P (48 aa).

Residues 1–12 are compositionally biased toward basic and acidic residues; it reads MTNKNDSKDMRK. Residues 1–48 are disordered; that stretch reads MTNKNDSKDMRKNVSKGDNPGQPEPLDGSKKVKNRNHTRQKHNTSHDM. The span at 31-48 shows a compositional bias: basic residues; that stretch reads KVKNRNHTRQKHNTSHDM.

This sequence belongs to the SspP family.

It is found in the spore core. This Geobacillus thermodenitrificans (strain NG80-2) protein is Small, acid-soluble spore protein P.